The sequence spans 256 residues: 1-(5-phosphoribosyl)-5-[(5-phosphoribosylamino)methylideneamino] imidazole-4-carboxamide isomerase (256 aa).

Catalysis depends on D8, which acts as the Proton acceptor. Catalysis depends on D129, which acts as the Proton donor.

It belongs to the HisA/HisF family.

It is found in the cytoplasm. It carries out the reaction 1-(5-phospho-beta-D-ribosyl)-5-[(5-phospho-beta-D-ribosylamino)methylideneamino]imidazole-4-carboxamide = 5-[(5-phospho-1-deoxy-D-ribulos-1-ylimino)methylamino]-1-(5-phospho-beta-D-ribosyl)imidazole-4-carboxamide. Its pathway is amino-acid biosynthesis; L-histidine biosynthesis; L-histidine from 5-phospho-alpha-D-ribose 1-diphosphate: step 4/9. In Synechococcus sp. (strain CC9311), this protein is 1-(5-phosphoribosyl)-5-[(5-phosphoribosylamino)methylideneamino] imidazole-4-carboxamide isomerase.